The primary structure comprises 178 residues: Alkyl hydroperoxide reductase AhpD (178 aa).

The active-site Proton donor is cysteine 130. The cysteines at positions 130 and 133 are disulfide-linked. The active-site Cysteine sulfenic acid (-SOH) intermediate is cysteine 133.

The protein belongs to the AhpD family. Homotrimer.

It catalyses the reaction N(6)-[(R)-dihydrolipoyl]-L-lysyl-[lipoyl-carrier protein] + a hydroperoxide = N(6)-[(R)-lipoyl]-L-lysyl-[lipoyl-carrier protein] + an alcohol + H2O. Functionally, antioxidant protein with alkyl hydroperoxidase activity. Required for the reduction of the AhpC active site cysteine residues and for the regeneration of the AhpC enzyme activity. In Mycobacterium marinum (strain ATCC BAA-535 / M), this protein is Alkyl hydroperoxide reductase AhpD.